The following is a 168-amino-acid chain: GTP-dependent dephospho-CoA kinase (168 aa).

GTP contacts are provided by Asp-40, Val-41, Val-42, Asp-59, and Glu-112.

It belongs to the GTP-dependent DPCK family.

It catalyses the reaction 3'-dephospho-CoA + GTP = GDP + CoA + H(+). The protein operates within cofactor biosynthesis; coenzyme A biosynthesis. Functionally, catalyzes the GTP-dependent phosphorylation of the 3'-hydroxyl group of dephosphocoenzyme A to form coenzyme A (CoA). This Methanoregula boonei (strain DSM 21154 / JCM 14090 / 6A8) protein is GTP-dependent dephospho-CoA kinase.